A 442-amino-acid chain; its full sequence is Glutamyl-tRNA reductase (442 aa).

Residues 49-52, Ser-109, 114-116, and Gln-120 contribute to the substrate site; these read TCNR and EGQ. The active-site Nucleophile is Cys-50. An NADP(+)-binding site is contributed by 198-203; it reads GAGRMA. A disordered region spans residues 420-442; it reads MAAAQRLFDLPGDDADRDRSDAK. The span at 433–442 shows a compositional bias: basic and acidic residues; the sequence is DADRDRSDAK.

This sequence belongs to the glutamyl-tRNA reductase family. In terms of assembly, homodimer.

The enzyme catalyses (S)-4-amino-5-oxopentanoate + tRNA(Glu) + NADP(+) = L-glutamyl-tRNA(Glu) + NADPH + H(+). It participates in porphyrin-containing compound metabolism; protoporphyrin-IX biosynthesis; 5-aminolevulinate from L-glutamyl-tRNA(Glu): step 1/2. The protein operates within porphyrin-containing compound metabolism; chlorophyll biosynthesis. Its function is as follows. Catalyzes the NADPH-dependent reduction of glutamyl-tRNA(Glu) to glutamate 1-semialdehyde (GSA). This is Glutamyl-tRNA reductase from Synechococcus sp. (strain RCC307).